A 383-amino-acid chain; its full sequence is S-adenosylmethionine synthase (383 aa).

His15 is an ATP binding site. Asp17 is a binding site for Mg(2+). Glu43 provides a ligand contact to K(+). L-methionine is bound by residues Glu56 and Gln99. The interval 99 to 109 (QSPDINQGVDR) is flexible loop. Residues 164 to 166 (DAK), 230 to 231 (RF), Asp239, 245 to 246 (RK), Ala262, and Lys266 each bind ATP. Asp239 contributes to the L-methionine binding site. Lys270 contributes to the L-methionine binding site.

This sequence belongs to the AdoMet synthase family. Homotetramer; dimer of dimers. Requires Mg(2+) as cofactor. K(+) is required as a cofactor.

It is found in the cytoplasm. The catalysed reaction is L-methionine + ATP + H2O = S-adenosyl-L-methionine + phosphate + diphosphate. Its pathway is amino-acid biosynthesis; S-adenosyl-L-methionine biosynthesis; S-adenosyl-L-methionine from L-methionine: step 1/1. Functionally, catalyzes the formation of S-adenosylmethionine (AdoMet) from methionine and ATP. The overall synthetic reaction is composed of two sequential steps, AdoMet formation and the subsequent tripolyphosphate hydrolysis which occurs prior to release of AdoMet from the enzyme. In Shewanella oneidensis (strain ATCC 700550 / JCM 31522 / CIP 106686 / LMG 19005 / NCIMB 14063 / MR-1), this protein is S-adenosylmethionine synthase.